Consider the following 527-residue polypeptide: Putative ribose/galactose/methyl galactoside import ATP-binding protein 2 (527 aa).

The interval 1-31 is disordered; that stretch reads MFTARVARPMAGDDAPAASSGSTGSSAPPAS. The segment covering 12–31 has biased composition (low complexity); sequence GDDAPAASSGSTGSSAPPAS. 2 ABC transporter domains span residues 38–274 and 284–523; these read LEVR…VGRE and VPIG…RIMD. Residue 70–77 participates in ATP binding; the sequence is GENGAGKS.

Belongs to the ABC transporter superfamily. Carbohydrate importer 2 (CUT2) (TC 3.A.1.2) family.

The protein localises to the cell inner membrane. The catalysed reaction is D-ribose(out) + ATP + H2O = D-ribose(in) + ADP + phosphate + H(+). It carries out the reaction D-galactose(out) + ATP + H2O = D-galactose(in) + ADP + phosphate + H(+). In terms of biological role, part of an ABC transporter complex involved in carbohydrate import. Could be involved in ribose, galactose and/or methyl galactoside import. Responsible for energy coupling to the transport system. This is Putative ribose/galactose/methyl galactoside import ATP-binding protein 2 from Burkholderia lata (strain ATCC 17760 / DSM 23089 / LMG 22485 / NCIMB 9086 / R18194 / 383).